The sequence spans 372 residues: Queuine tRNA-ribosyltransferase (372 aa).

Catalysis depends on Asp-92, which acts as the Proton acceptor. Substrate-binding positions include 92-96, Asp-146, Gln-188, and Gly-215; that span reads DSGGY. The tract at residues 246-252 is RNA binding; the sequence is GIGSLRE. Residue Asp-265 is the Nucleophile of the active site. The tract at residues 270 to 274 is RNA binding; important for wobble base 34 recognition; that stretch reads TRLGR. Zn(2+) is bound by residues Cys-303, Cys-305, Cys-308, and His-334.

It belongs to the queuine tRNA-ribosyltransferase family. Homodimer. Within each dimer, one monomer is responsible for RNA recognition and catalysis, while the other monomer binds to the replacement base PreQ1. Requires Zn(2+) as cofactor.

It carries out the reaction 7-aminomethyl-7-carbaguanine + guanosine(34) in tRNA = 7-aminomethyl-7-carbaguanosine(34) in tRNA + guanine. It participates in tRNA modification; tRNA-queuosine biosynthesis. Functionally, catalyzes the base-exchange of a guanine (G) residue with the queuine precursor 7-aminomethyl-7-deazaguanine (PreQ1) at position 34 (anticodon wobble position) in tRNAs with GU(N) anticodons (tRNA-Asp, -Asn, -His and -Tyr). Catalysis occurs through a double-displacement mechanism. The nucleophile active site attacks the C1' of nucleotide 34 to detach the guanine base from the RNA, forming a covalent enzyme-RNA intermediate. The proton acceptor active site deprotonates the incoming PreQ1, allowing a nucleophilic attack on the C1' of the ribose to form the product. After dissociation, two additional enzymatic reactions on the tRNA convert PreQ1 to queuine (Q), resulting in the hypermodified nucleoside queuosine (7-(((4,5-cis-dihydroxy-2-cyclopenten-1-yl)amino)methyl)-7-deazaguanosine). The sequence is that of Queuine tRNA-ribosyltransferase from Prochlorococcus marinus (strain MIT 9312).